Here is a 381-residue protein sequence, read N- to C-terminus: Adenylate cyclase (381 aa).

Residues 1–30 (MTVDDTGSGADGDGRVDPEPAPDSADPGED) form a disordered region. The 110-residue stretch at 191 to 300 (AVGFADLVGF…TTVNLASRLT (110 aa)) folds into the Guanylate cyclase domain. Mg(2+) is bound by residues aspartate 196 and aspartate 240.

Belongs to the adenylyl cyclase class-3 family. Requires Mg(2+) as cofactor.

It carries out the reaction ATP = 3',5'-cyclic AMP + diphosphate. The sequence is that of Adenylate cyclase (cya) from Streptomyces coelicolor (strain ATCC BAA-471 / A3(2) / M145).